A 50-amino-acid chain; its full sequence is Conotoxin Bu13 (50 aa).

Residue Ala-1 is a signal peptide. The propeptide occupies 2–24; the sequence is EDSRGTQLHRALRKTTKLSLSIR. 3 cysteine pairs are disulfide-bonded: Cys-25–Cys-40, Cys-32–Cys-44, and Cys-39–Cys-49.

It belongs to the conotoxin O1 superfamily. Expressed by the venom duct.

Its subcellular location is the secreted. This chain is Conotoxin Bu13, found in Conus bullatus (Bubble cone).